Reading from the N-terminus, the 426-residue chain is Multifunctional protein ADE2 (426 aa).

Residues 1 to 261 (MAPAASELKL…WVAERVELLL (261 aa)) form an SAICAR synthetase region. The tract at residues 262 to 426 (KTKSQGRVVV…ADKKLRECTL (165 aa)) is AIR carboxylase.

In the N-terminal section; belongs to the SAICAR synthetase family. The protein in the C-terminal section; belongs to the AIR carboxylase family. Class II subfamily. As to quaternary structure, homooctamer.

The enzyme catalyses 5-amino-1-(5-phospho-D-ribosyl)imidazole-4-carboxylate + L-aspartate + ATP = (2S)-2-[5-amino-1-(5-phospho-beta-D-ribosyl)imidazole-4-carboxamido]succinate + ADP + phosphate + 2 H(+). It catalyses the reaction 5-amino-1-(5-phospho-D-ribosyl)imidazole-4-carboxylate + H(+) = 5-amino-1-(5-phospho-beta-D-ribosyl)imidazole + CO2. It functions in the pathway purine metabolism; IMP biosynthesis via de novo pathway; 5-amino-1-(5-phospho-D-ribosyl)imidazole-4-carboxamide from 5-amino-1-(5-phospho-D-ribosyl)imidazole-4-carboxylate: step 1/2. Its pathway is purine metabolism; IMP biosynthesis via de novo pathway; 5-amino-1-(5-phospho-D-ribosyl)imidazole-4-carboxylate from 5-amino-1-(5-phospho-D-ribosyl)imidazole (carboxylase route): step 1/1. The protein is Multifunctional protein ADE2 (AIRC) of Gallus gallus (Chicken).